Here is a 252-residue protein sequence, read N- to C-terminus: MNKLQNIRGVAFDLDGTLVDSAPGLAAAVDMALYALELPVAGEERVITWIGNGADVLMERALTWASQERATLRKTMGKPPVDEDIPAEEQVRILRKLFDKYYGEVAEEGTFLFPHVADTLGALHASGLSLGLVTNKPTPFVAPLLESLDIAKYFSVVIGGDDVQNKKPHPEPLLLVASRLGMTPEQMLFVGDSRNDIQAAKAAGCPSVGLTYGYNYGEVIALSEPDVIYDSFNDLLPALGLPHSDNQEIKND.

D13 serves as the catalytic Nucleophile. The Mg(2+) site is built by D13, D15, and D192.

It belongs to the HAD-like hydrolase superfamily. CbbY/CbbZ/Gph/YieH family. As to quaternary structure, monomer. Mg(2+) serves as cofactor. The cofactor is chloride.

It carries out the reaction 2-phosphoglycolate + H2O = glycolate + phosphate. It participates in organic acid metabolism; glycolate biosynthesis; glycolate from 2-phosphoglycolate: step 1/1. Functionally, specifically catalyzes the dephosphorylation of 2-phosphoglycolate. Is involved in the dissimilation of the intracellular 2-phosphoglycolate formed during the DNA repair of 3'-phosphoglycolate ends, a major class of DNA lesions induced by oxidative stress. The polypeptide is Phosphoglycolate phosphatase (Salmonella typhi).